The sequence spans 579 residues: Potassium-transporting ATPase potassium-binding subunit (579 aa).

Helical transmembrane passes span 1–21 (MISN…ACVV), 64–84 (HYAL…YGLQ), 135–155 (GLTV…IGLI), 178–198 (IYIL…QGVV), 265–285 (FLEL…FGLM), 293–313 (WAIL…AVSA), 398–418 (GLYG…LMVG), 435–455 (MAAL…AIAV), 503–523 (WLGI…LAIA), and 549–569 (LLIG…LALG).

This sequence belongs to the KdpA family. In terms of assembly, the system is composed of three essential subunits: KdpA, KdpB and KdpC.

It is found in the cell membrane. In terms of biological role, part of the high-affinity ATP-driven potassium transport (or Kdp) system, which catalyzes the hydrolysis of ATP coupled with the electrogenic transport of potassium into the cytoplasm. This subunit binds the extracellular potassium ions and delivers the ions to the membrane domain of KdpB through an intramembrane tunnel. This Herpetosiphon aurantiacus (strain ATCC 23779 / DSM 785 / 114-95) protein is Potassium-transporting ATPase potassium-binding subunit.